The chain runs to 148 residues: uncharacterized protein (148 aa).

One can recognise an HTH asnC-type domain in the interval 4–65 (LDRVDMQLVK…IPDIDKLGYM (62 aa)). A DNA-binding region (H-T-H motif) is located at residues 23–42 (YRELADILNTTRQRIARRID).

This is an uncharacterized protein from Pyrococcus horikoshii (strain ATCC 700860 / DSM 12428 / JCM 9974 / NBRC 100139 / OT-3).